The primary structure comprises 187 residues: RNA pyrophosphohydrolase (187 aa).

The Nudix hydrolase domain occupies 6 to 149 (GYRANVGIIL…KRQVYRLALT (144 aa)). A Nudix box motif is present at residues 38-59 (GGIKSGETPTQAMYRELAEETG).

It belongs to the Nudix hydrolase family. RppH subfamily. A divalent metal cation serves as cofactor.

Its function is as follows. Accelerates the degradation of transcripts by removing pyrophosphate from the 5'-end of triphosphorylated RNA, leading to a more labile monophosphorylated state that can stimulate subsequent ribonuclease cleavage. The protein is RNA pyrophosphohydrolase of Nitrosomonas eutropha (strain DSM 101675 / C91 / Nm57).